A 754-amino-acid polypeptide reads, in one-letter code: Polycomb protein mes-3 (754 aa).

The disordered stretch occupies residues 1–83 (MTPATAEVKV…PTKLENIQKT (83 aa)). Positions 31 to 40 (ARREEEKENL) are enriched in basic and acidic residues. Positions 51–61 (SSEAGSSRESS) are enriched in low complexity.

As to quaternary structure, forms a heterotrimeric complex with the Polycomb proteins mes-2 and mes-3. Does not interact with mes-4. Interacts with nyfa-1. In adults, it is predominantly expressed in the germline, and weakly expressed in intestinal cells.

It localises to the nucleus. Functionally, component of a Polycomb group (PcG) complex. PcG proteins act by forming multiprotein complexes, which are required to maintain the transcriptionally repressive state of homeotic genes throughout development. In association with the nfya-1-NF-Y complex, may play a role in repressing the expression of the homeobox protein egl-5 in tissues such as the head. PcG proteins are not required to initiate repression, but to maintain it during later stages of development. The mes-2/mes-3/mes-6 complex may participate in the global inactivation of the X chromosomes in germline cells. The complex may act via methylation of histone H3 'Lys-27', rendering chromatin heritably changed in its expressibility. This complex is required to exclude mes-4 from the inactivated X-chromosomes in germline cells. The polypeptide is Polycomb protein mes-3 (Caenorhabditis elegans).